Reading from the N-terminus, the 400-residue chain is Argininosuccinate synthase (400 aa).

8-16 contributes to the ATP binding site; the sequence is AYSGGLDTS. Residue Y85 coordinates L-citrulline. G115 serves as a coordination point for ATP. The L-aspartate site is built by T117, N121, and D122. N121 serves as a coordination point for L-citrulline. The L-citrulline site is built by R125, S173, E258, and Y270.

The protein belongs to the argininosuccinate synthase family. Type 1 subfamily. In terms of assembly, homotetramer.

Its subcellular location is the cytoplasm. The enzyme catalyses L-citrulline + L-aspartate + ATP = 2-(N(omega)-L-arginino)succinate + AMP + diphosphate + H(+). It participates in amino-acid biosynthesis; L-arginine biosynthesis; L-arginine from L-ornithine and carbamoyl phosphate: step 2/3. The chain is Argininosuccinate synthase from Staphylococcus haemolyticus (strain JCSC1435).